A 326-amino-acid polypeptide reads, in one-letter code: Probable cell division protein WhiA (326 aa).

Residues 275–308 (SLDELGHYADPPMTKDAVAGRIRRLLAMADKRAS) constitute a DNA-binding region (H-T-H motif).

It belongs to the WhiA family.

Involved in cell division and chromosome segregation. This is Probable cell division protein WhiA from Leifsonia xyli subsp. xyli (strain CTCB07).